A 349-amino-acid chain; its full sequence is Guanine nucleotide-binding protein alpha-13 subunit (349 aa).

Gly2 is lipidated: N-myristoyl glycine. Cys3 carries S-palmitoyl cysteine lipidation. The G-alpha domain maps to 35–349 (SHIRLLLLGS…VFKDIMKRKR (315 aa)). The interval 38-51 (RLLLLGSAESGKTT) is G1 motif. Residues 43 to 50 (GSAESGKT), 177 to 183 (IMAYVPT), 202 to 206 (DIGGQ), 271 to 274 (NEID), and Ala327 contribute to the GTP site. Residues 175 to 183 (DLIMAYVPT) are G2 motif. A Mg(2+)-binding site is contributed by Thr183. Positions 198-207 (FQLFDIGGQK) are G3 motif. Residues 267 to 274 (YLFLNEID) are G4 motif. The G5 motif stretch occupies residues 325–330 (CIAIDT).

It belongs to the G-alpha family. In terms of assembly, g proteins are composed of 3 units; alpha, beta and gamma. The alpha chain contains the guanine nucleotide binding site.

In terms of biological role, guanine nucleotide-binding proteins (G proteins) are involved as modulators or transducers in various transmembrane signaling systems. The sequence is that of Guanine nucleotide-binding protein alpha-13 subunit from Caenorhabditis briggsae.